The following is a 187-amino-acid chain: Virulence protein ATR13 (187 aa).

The N-terminal stretch at 1 to 19 (MRLVHAVLLPGIIVFVSNG) is a signal peptide. A RxLR motif is present at residues 38-41 (RQLR). The leucine heptad repeat region stretch occupies residues 50-92 (LSRASFGLGKAQDPLDKFFRKIINSRKPIETSYSAKGIHEKII). 4 repeat units span residues 93–103 (KAYDRHVFESK), 104–114 (KAHDRHVSKSK), 115–125 (KAHGRHVSKSK), and 126–136 (MAHDRHVSKSE). The interval 93 to 136 (KAYDRHVFESKKAHDRHVSKSKKAHGRHVSKSKMAHDRHVSKSE) is 4 X 11 AA tandem repeats. The interval 104 to 136 (KAHDRHVSKSKKAHGRHVSKSKMAHDRHVSKSE) is disordered. Over residues 111 to 125 (SKSKKAHGRHVSKSK) the composition is skewed to basic residues. Basic and acidic residues predominate over residues 126–136 (MAHDRHVSKSE). The interval 137-187 (KAPIQYASVADYLKKIYPGTDIERIVSTLKRHDEVGAKDLGAKLQTAVASQ) is highly variable C-terminus domain.

The protein belongs to the RxLR effector family.

It is found in the secreted. Its subcellular location is the host nucleus. The protein localises to the host nucleolus. The protein resides in the host cytoplasm. In terms of biological role, secreted effector that acts as an elicitor of hypersensitive response (HR) specifically on plants carrying defense protein RPP13. Recognition of ATR13 by RPP13 initiates defense responses that are effective against oomycete, bacterial and viral pathogens. Due to high polymorphism, ATR13-Emoy2 does not recognize RPP13-Nd, the RPP13 defense protein from Arabidopsis thaliana ecotype Niederzenz. ATR13-Emoy2 is recognized by RPP13 variants RPP13-UKID44, RPP13-UKID65 and RPP13-UKID71. The polypeptide is Virulence protein ATR13 (Hyaloperonospora arabidopsidis (strain Emoy2) (Downy mildew agent)).